The sequence spans 644 residues: 3D-(3,5/4)-trihydroxycyclohexane-1,2-dione hydrolase (644 aa).

Thiamine diphosphate is bound at residue E65. Positions 442–522 (SLPGDLQRMW…INVLLFDNSG (81 aa)) are thiamine pyrophosphate binding. D493 and N520 together coordinate Mg(2+).

This sequence belongs to the TPP enzyme family. It depends on Mg(2+) as a cofactor. Thiamine diphosphate serves as cofactor.

The enzyme catalyses 3D-3,5/4-trihydroxycyclohexane-1,2-dione + H2O = 5-deoxy-D-glucuronate + H(+). It functions in the pathway polyol metabolism; myo-inositol degradation into acetyl-CoA; acetyl-CoA from myo-inositol: step 3/7. Its function is as follows. Involved in the cleavage of the C1-C2 bond of 3D-(3,5/4)-trihydroxycyclohexane-1,2-dione (THcHDO) to yield 5-deoxy-glucuronate (5DG). The sequence is that of 3D-(3,5/4)-trihydroxycyclohexane-1,2-dione hydrolase from Bacillus anthracis (strain A0248).